Reading from the N-terminus, the 229-residue chain is UPF0173 metal-dependent hydrolase SERP1270 (229 aa).

This sequence belongs to the UPF0173 family.

This chain is UPF0173 metal-dependent hydrolase SERP1270, found in Staphylococcus epidermidis (strain ATCC 35984 / DSM 28319 / BCRC 17069 / CCUG 31568 / BM 3577 / RP62A).